Reading from the N-terminus, the 102-residue chain is Mitochondrial import inner membrane translocase subunit Tim10 B (102 aa).

A Twin CX3C motif motif is present at residues 27–51 (CFQRCVPSLHHRALDAEEEACLHSC). Cystine bridges form between C27–C51 and C31–C47.

As to quaternary structure, component of the TIM22 complex, which core is composed of TIMM22, associated with TIMM10 (TIMM10A and/or TIMM10B), TIMM9, AGK and TIMM29.

It is found in the mitochondrion inner membrane. Functionally, component of the TIM22 complex, a complex that mediates the import and insertion of multi-pass transmembrane proteins into the mitochondrial inner membrane. The TIM22 complex forms a twin-pore translocase that uses the membrane potential as the external driving force. In the TIM22 complex, it may act as a docking point for the soluble 70 kDa complex that guides the target proteins in transit through the aqueous mitochondrial intermembrane space. This chain is Mitochondrial import inner membrane translocase subunit Tim10 B (TIMM10B), found in Pongo abelii (Sumatran orangutan).